Consider the following 242-residue polypeptide: Ribosomal RNA small subunit methyltransferase G (242 aa).

S-adenosyl-L-methionine-binding positions include G78, F83, 129–130 (AE), and R148. A disordered region spans residues 221-242 (TKKRYPRKAGVPEKSPIGGKHD).

The protein belongs to the methyltransferase superfamily. RNA methyltransferase RsmG family.

The protein resides in the cytoplasm. Specifically methylates the N7 position of a guanine in 16S rRNA. This is Ribosomal RNA small subunit methyltransferase G from Oenococcus oeni (strain ATCC BAA-331 / PSU-1).